The following is a 90-amino-acid chain: Exodeoxyribonuclease 7 small subunit (90 aa).

The disordered stretch occupies residues 62–90 (QDGQANPMSSQGHTAGEYPDDEAEEAEEA). The segment covering 64 to 74 (GQANPMSSQGH) has biased composition (polar residues). Residues 79 to 90 (YPDDEAEEAEEA) show a composition bias toward acidic residues.

Belongs to the XseB family. In terms of assembly, heterooligomer composed of large and small subunits.

Its subcellular location is the cytoplasm. It carries out the reaction Exonucleolytic cleavage in either 5'- to 3'- or 3'- to 5'-direction to yield nucleoside 5'-phosphates.. Its function is as follows. Bidirectionally degrades single-stranded DNA into large acid-insoluble oligonucleotides, which are then degraded further into small acid-soluble oligonucleotides. In Desulfovibrio desulfuricans (strain ATCC 27774 / DSM 6949 / MB), this protein is Exodeoxyribonuclease 7 small subunit.